The sequence spans 291 residues: Gamma-soluble NSF attachment protein (291 aa).

The protein belongs to the SNAP family.

It localises to the membrane. Required for vesicular transport between the endoplasmic reticulum and the Golgi apparatus. Binds to SNARE complex and then recruits NSF to disassemble it. The sequence is that of Gamma-soluble NSF attachment protein (GSNAP) from Arabidopsis thaliana (Mouse-ear cress).